The primary structure comprises 928 residues: DNA polymerase I (928 aa).

Residues 1 to 323 (MVQIPQNPLI…ADEAPEVTAT (323 aa)) enclose the 5'-3' exonuclease domain. The region spanning 324–517 (VISYDNYVTI…LHLKMWPDLQ (194 aa)) is the 3'-5' exonuclease domain. The klenow fragment stretch occupies residues 324–928 (VISYDNYVTI…GSGENWDQAH (605 aa)). The segment at 521–928 (GPLNVFENIE…GSGENWDQAH (408 aa)) is polymerase.

The protein belongs to the DNA polymerase type-A family. In terms of assembly, single-chain monomer with multiple functions.

The catalysed reaction is DNA(n) + a 2'-deoxyribonucleoside 5'-triphosphate = DNA(n+1) + diphosphate. Functionally, in addition to polymerase activity, this DNA polymerase exhibits 3'-5' and 5'-3' exonuclease activity. It is able to utilize nicked circular duplex DNA as a template and can unwind the parental DNA strand from its template. Genetic interactions among priB, dam, lexA, nagC, polA, rdgB, rdgB, rep and uup link the PriA-PriB replication restart pathway to DNA double-strand break repair. This Escherichia coli (strain K12) protein is DNA polymerase I (polA).